We begin with the raw amino-acid sequence, 1725 residues long: Latrophilin Cirl (1725 aa).

Topologically, residues M1 to R757 are extracellular. An SUEL-type lectin domain is found at A18 to I107. A glycan (N-linked (GlcNAc...) asparagine) is linked at N135. The tract at residues A164–G284 is disordered. Low complexity-rich tracts occupy residues P167–T176 and S224–N236. N-linked (GlcNAc...) asparagine glycosylation is found at N236, N278, N326, N388, N645, N693, and N720. Polar residues predominate over residues L259 to N282. A disordered region spans residues D361–S390. The segment covering A371 to S390 has biased composition (polar residues). Positions R551–H744 constitute a GAIN-B domain. 2 disulfides stabilise this stretch: C699–C726 and C714–C728. The interval C699–H744 is GPS. The helical transmembrane segment at I758–L778 threads the bilayer. The Cytoplasmic portion of the chain corresponds to K779–T791. A helical membrane pass occupies residues S792–I812. At E813–S818 the chain is on the extracellular side. Residues I819–F839 traverse the membrane as a helical segment. The Cytoplasmic segment spans residues C840 to V865. A helical membrane pass occupies residues N866 to I886. The Extracellular segment spans residues D887 to F910. The chain crosses the membrane as a helical span at residues V911–I931. The Cytoplasmic segment spans residues M932–S958. The helical transmembrane segment at F959–A979 threads the bilayer. Residues K980–A986 lie on the Extracellular side of the membrane. The chain crosses the membrane as a helical span at residues P987–F1007. Over H1008–K1725 the chain is Cytoplasmic. The segment at T1056 to Q1088 is disordered. Residue S1153 is modified to Phosphoserine. Disordered regions lie at residues H1236 to R1263, Q1309 to H1337, G1472 to R1555, and L1636 to H1705. Basic residues predominate over residues N1237–G1246. Phosphoserine is present on residues S1255 and S1262. Low complexity predominate over residues Q1309–L1327. S1328 and S1329 each carry phosphoserine. Over residues G1478–K1496 the composition is skewed to low complexity. 2 stretches are compositionally biased toward acidic residues: residues D1505–T1522 and C1532–D1543. The span at Q1651 to Q1666 shows a compositional bias: polar residues. Over residues S1667–A1683 the composition is skewed to low complexity. A compositionally biased stretch (basic residues) spans P1684–T1693. Residues Q1694–H1705 are compositionally biased toward low complexity.

This sequence belongs to the G-protein coupled receptor 2 family. LN-TM7 subfamily. Forms a heterodimer, consisting of a large extracellular region non-covalently linked to a seven-transmembrane moiety. Proteolytically cleaved into 2 subunits, an extracellular subunit and a seven-transmembrane subunit.

It localises to the cell membrane. This Drosophila mojavensis (Fruit fly) protein is Latrophilin Cirl.